Consider the following 473-residue polypeptide: H(+)/Cl(-) exchange transporter ClcA (473 aa).

Residues 1–32 (MKTDTSTFLAQQIVRLRRRDQIRRLMQRDKTP) are Cytoplasmic-facing. Residues 33 to 69 (LAILFMAAVVGTLTGLVGVAFEKAVSWVQNMRIGALV) form a helical membrane-spanning segment. Residues 70 to 76 (QVADHAF) are Periplasmic-facing. Residues 77–100 (LLWPLAFILSALLAMVGYFLVRKF) traverse the membrane as a helical segment. Residues 106-110 (GSGIP) carry the Selectivity filter part_1 motif. S107 is a chloride binding site. The helical intramembrane region spans 109-116 (IPEIEGAL). The Cytoplasmic portion of the chain corresponds to 117–123 (EELRPVR). A run of 2 helical transmembrane segments spans residues 124–141 (WWRVLPVKFIGGMGTLGA) and 148–166 (EGPTVQIGGNLGRMVLDVF). Positions 146–150 (GREGP) match the Selectivity filter part_2 motif. Residues 167–176 (RMRSAEARHT) are Cytoplasmic-facing. 2 intramembrane regions (helical) span residues 177–189 (LLATGAAAGLSAA) and 193–201 (PLAGILFII). Over 202–214 (EEMRPQFRYNLIS) the chain is Cytoplasmic. Residues 215–232 (IKAVFTGVIMSSIVFRIF) form a helical membrane-spanning segment. The Periplasmic segment spans residues 233-252 (NGEAPIIEVGKLSDAPVNTL). Residues 253 to 281 (WLYLILGIIFGCVGPVFNSLVLRTQDMFQ) form a helical membrane-spanning segment. Residues 282 to 287 (RFHGGE) lie on the Cytoplasmic side of the membrane. The helical transmembrane segment at 288–309 (IKKWVLMGGAIGGLCGILGLIE) threads the bilayer. The Periplasmic segment spans residues 310–329 (PEAAGGGFNLIPIAAAGNFS). Transmembrane regions (helical) follow at residues 330 to 349 (VGLLLFIFIARVVTTLLCFS) and 355 to 376 (GIFAPMLALGTLLGTAFGMAAA). The short motif at 355–359 (GIFAP) is the Selectivity filter part_3 element. The chloride site is built by I356 and F357. Over 377–386 (VLFPQYHLEA) the chain is Periplasmic. The segment at residues 387–401 (GTFAIAGMGALMAAS) is an intramembrane region (helical). Positions 402–404 (VRA) form an intramembrane region, note=Loop between two helices. Residues 405–416 (PLTGIVLVLEMT) constitute an intramembrane region (helical). Residues 417 to 421 (DNYQL) constitute an intramembrane region (note=Loop between two helices). A helical transmembrane segment spans residues 422–438 (ILPMIITCLGATLLAQF). Over 439–473 (LGGKPLYSTILARTLAKQDAEQAAKNQNAPAGENT) the chain is Cytoplasmic. Y445 contacts chloride.

Belongs to the chloride channel (TC 2.A.49) family. ClcA subfamily. As to quaternary structure, homodimer.

Its subcellular location is the cell inner membrane. It catalyses the reaction 2 chloride(in) + H(+)(out) = 2 chloride(out) + H(+)(in). Functionally, proton-coupled chloride transporter. Functions as antiport system and exchanges two chloride ions for 1 proton. Probably acts as an electrical shunt for an outwardly-directed proton pump that is linked to amino acid decarboxylation, as part of the extreme acid resistance (XAR) response. This chain is H(+)/Cl(-) exchange transporter ClcA, found in Salmonella agona (strain SL483).